The primary structure comprises 278 residues: 4-deoxy-L-threo-5-hexosulose-uronate ketol-isomerase (278 aa).

Zn(2+) is bound by residues H196, H198, E203, and H245.

Belongs to the KduI family. Zn(2+) serves as cofactor.

The enzyme catalyses 5-dehydro-4-deoxy-D-glucuronate = 3-deoxy-D-glycero-2,5-hexodiulosonate. It participates in glycan metabolism; pectin degradation; 2-dehydro-3-deoxy-D-gluconate from pectin: step 4/5. Catalyzes the isomerization of 5-dehydro-4-deoxy-D-glucuronate to 3-deoxy-D-glycero-2,5-hexodiulosonate. This is 4-deoxy-L-threo-5-hexosulose-uronate ketol-isomerase from Shigella flexneri.